A 247-amino-acid polypeptide reads, in one-letter code: DNA repair protein RecO (247 aa).

The protein belongs to the RecO family.

In terms of biological role, involved in DNA repair and RecF pathway recombination. In Methylocella silvestris (strain DSM 15510 / CIP 108128 / LMG 27833 / NCIMB 13906 / BL2), this protein is DNA repair protein RecO.